The chain runs to 158 residues: Ribosome maturation factor RimP (158 aa).

This sequence belongs to the RimP family.

The protein localises to the cytoplasm. Required for maturation of 30S ribosomal subunits. The polypeptide is Ribosome maturation factor RimP (Pseudomonas fluorescens (strain Pf0-1)).